The sequence spans 167 residues: I-Kappa-B like protein I1 (167 aa).

3 ANK repeats span residues 54-86 (HGKQ…DING), 91-121 (FGNT…NMGI), and 125-154 (LFKT…QCRI).

It belongs to the polydnaviridae I-Kappa-B-like protein family.

Suppresses the host immune response through NF-kappa-B inactivation. Possesses ankyrin repeat domains required for NF-kappa-B binding but lacks the regulatory regions required for dissociation from NF-kappa-B and degradation. Therefore, prevents host NF-kappa-B release and subsequent activation. This is I-Kappa-B like protein I1 (I1) from Microplitis demolitor (Parasitoid wasp).